A 227-amino-acid chain; its full sequence is Cytochrome c oxidase subunit 2 (227 aa).

Over 1-14 (MAYPMQLGFQDATS) the chain is Mitochondrial intermembrane. A helical transmembrane segment spans residues 15-45 (PIMEELLHFHDHTLMIVFLISSLVLYIISLM). The Mitochondrial matrix portion of the chain corresponds to 46–59 (LTTKLTHTSTMDAQ). A helical transmembrane segment spans residues 60–87 (EVETVWTILPAVILIMIALPSLRILYMM). Residues 88-227 (DEINNPSLTV…HFEKWSASML (140 aa)) are Mitochondrial intermembrane-facing. Residues His161, Cys196, Glu198, Cys200, His204, and Met207 each contribute to the Cu cation site. Glu198 provides a ligand contact to Mg(2+).

It belongs to the cytochrome c oxidase subunit 2 family. As to quaternary structure, component of the cytochrome c oxidase (complex IV, CIV), a multisubunit enzyme composed of 14 subunits. The complex is composed of a catalytic core of 3 subunits MT-CO1, MT-CO2 and MT-CO3, encoded in the mitochondrial DNA, and 11 supernumerary subunits COX4I, COX5A, COX5B, COX6A, COX6B, COX6C, COX7A, COX7B, COX7C, COX8 and NDUFA4, which are encoded in the nuclear genome. The complex exists as a monomer or a dimer and forms supercomplexes (SCs) in the inner mitochondrial membrane with NADH-ubiquinone oxidoreductase (complex I, CI) and ubiquinol-cytochrome c oxidoreductase (cytochrome b-c1 complex, complex III, CIII), resulting in different assemblies (supercomplex SCI(1)III(2)IV(1) and megacomplex MCI(2)III(2)IV(2)). Found in a complex with TMEM177, COA6, COX18, COX20, SCO1 and SCO2. Interacts with TMEM177 in a COX20-dependent manner. Interacts with COX20. Interacts with COX16. Cu cation is required as a cofactor.

The protein localises to the mitochondrion inner membrane. The enzyme catalyses 4 Fe(II)-[cytochrome c] + O2 + 8 H(+)(in) = 4 Fe(III)-[cytochrome c] + 2 H2O + 4 H(+)(out). Its function is as follows. Component of the cytochrome c oxidase, the last enzyme in the mitochondrial electron transport chain which drives oxidative phosphorylation. The respiratory chain contains 3 multisubunit complexes succinate dehydrogenase (complex II, CII), ubiquinol-cytochrome c oxidoreductase (cytochrome b-c1 complex, complex III, CIII) and cytochrome c oxidase (complex IV, CIV), that cooperate to transfer electrons derived from NADH and succinate to molecular oxygen, creating an electrochemical gradient over the inner membrane that drives transmembrane transport and the ATP synthase. Cytochrome c oxidase is the component of the respiratory chain that catalyzes the reduction of oxygen to water. Electrons originating from reduced cytochrome c in the intermembrane space (IMS) are transferred via the dinuclear copper A center (CU(A)) of subunit 2 and heme A of subunit 1 to the active site in subunit 1, a binuclear center (BNC) formed by heme A3 and copper B (CU(B)). The BNC reduces molecular oxygen to 2 water molecules using 4 electrons from cytochrome c in the IMS and 4 protons from the mitochondrial matrix. This is Cytochrome c oxidase subunit 2 (MT-CO2) from Tragelaphus imberbis (Lesser kudu).